Reading from the N-terminus, the 1888-residue chain is E3 ubiquitin-protein ligase UBR3 (1888 aa).

The interval 1 to 24 is disordered; sequence MAAAAAAAVGGQQPSQPELPAPGL. The segment at 118-189 adopts a UBR-type zinc-finger fold; it reads ALCGLVWTAN…ESGFCKRHQI (72 aa). A disordered region spans residues 339-362; sequence GQVDSSDEDDQDGSQGLGKRKRVK. A phosphoserine mark is found at serine 343 and serine 344. Helical transmembrane passes span 761-781 and 919-939; these read MLEGALTFLVILLSLRLHLGM and LLHCKTLHIVLFTLLYKILMD. 2 disordered regions span residues 1008–1028 and 1164–1186; these read APEVKRDSPASTSSDNLGSLQ and VPPKKVTAAEKKTLDKEERRQKA. Residues 1016-1028 are compositionally biased toward polar residues; that stretch reads PASTSSDNLGSLQ. The stretch at 1168–1199 forms a coiled coil; sequence KVTAAEKKTLDKEERRQKARERQQKLLAEFAS. The segment covering 1170–1186 has biased composition (basic and acidic residues); that stretch reads TAAEKKTLDKEERRQKA. Serine 1199 is subject to Phosphoserine. An RING-type; degenerate zinc finger spans residues 1306–1364; sequence DSSCLLAVSIGWEGGVYVQTCGHTLHIDCHKSYMESLRNDQVLQGFSVDKGEFTCPLCR. A helical membrane pass occupies residues 1806–1826; the sequence is QNCGAGTGIFLLINASVIIII.

This sequence belongs to the E3 ubiquitin-protein ligase UBR1-like family. In terms of assembly, interacts with UBE2A and UBE2B.

It localises to the membrane. It catalyses the reaction S-ubiquitinyl-[E2 ubiquitin-conjugating enzyme]-L-cysteine + [acceptor protein]-L-lysine = [E2 ubiquitin-conjugating enzyme]-L-cysteine + N(6)-ubiquitinyl-[acceptor protein]-L-lysine.. It participates in protein modification; protein ubiquitination. Its function is as follows. E3 ubiquitin-protein ligase which is a component of the N-end rule pathway. Does not bind to proteins bearing specific N-terminal residues that are destabilizing according to the N-end rule, leading to their ubiquitination and subsequent degradation. May play a role in Shh signaling by mediating the ubiquitination of Kif7. May be important for MYH9 function in certain tissues, possibly by regulating the ubiquitination of MYH9 and consequently affecting its interaction with MYO7A. The sequence is that of E3 ubiquitin-protein ligase UBR3 (UBR3) from Homo sapiens (Human).